The sequence spans 308 residues: Staphylococcal superantigen-like 4 (308 aa).

A signal peptide spans 1 to 30 (MKITTIAKTSLALGLLTTGVITTTTQAANA). The tract at residues 32–117 (TLSSTKVEAP…TTKQVPTEIN (86 aa)) is disordered. Polar residues-rich tracts occupy residues 33–47 (LSST…TPPS) and 55–76 (SKPN…TANA). Over residues 77-93 (TTPPSTKVTTPPSTNTP) the composition is skewed to low complexity. Over residues 94 to 114 (QPMQSTKSDTPQSPTTKQVPT) the composition is skewed to polar residues. The tract at residues 180-278 (VDVFVVLEEN…VIKMKNGGKY (99 aa)) is sialyl Lewis X-binding.

It belongs to the staphylococcal/streptococcal toxin family.

The protein localises to the secreted. Secreted protein that plays a role in immune innate response inhibition by interfering with host TLR2-mediated pathway. In Staphylococcus aureus (strain NCTC 8325 / PS 47), this protein is Staphylococcal superantigen-like 4.